An 85-amino-acid polypeptide reads, in one-letter code: METLLSFSAIAVGIIVGLASLGTAIGFALLGGKFLEGAARQPEMAPMLQVKMFIIAGLLDAVPMIGIVIALLFTFANPFVGQLAG.

The next 2 helical transmembrane spans lie at 10-30 (IAVG…FALL) and 53-73 (FIIA…ALLF).

The protein belongs to the ATPase C chain family. As to quaternary structure, F-type ATPases have 2 components, F(1) - the catalytic core - and F(0) - the membrane proton channel. F(1) has five subunits: alpha(3), beta(3), gamma(1), delta(1), epsilon(1). F(0) has three main subunits: a(1), b(2) and c(10-14). The alpha and beta chains form an alternating ring which encloses part of the gamma chain. F(1) is attached to F(0) by a central stalk formed by the gamma and epsilon chains, while a peripheral stalk is formed by the delta and b chains.

The protein resides in the cell inner membrane. Its function is as follows. F(1)F(0) ATP synthase produces ATP from ADP in the presence of a proton or sodium gradient. F-type ATPases consist of two structural domains, F(1) containing the extramembraneous catalytic core and F(0) containing the membrane proton channel, linked together by a central stalk and a peripheral stalk. During catalysis, ATP synthesis in the catalytic domain of F(1) is coupled via a rotary mechanism of the central stalk subunits to proton translocation. Functionally, key component of the F(0) channel; it plays a direct role in translocation across the membrane. A homomeric c-ring of between 10-14 subunits forms the central stalk rotor element with the F(1) delta and epsilon subunits. The sequence is that of ATP synthase subunit c from Aliivibrio fischeri (strain ATCC 700601 / ES114) (Vibrio fischeri).